The following is a 219-amino-acid chain: MSELPADQGVPPAGAANDNGDVRQAEVGGRRREPAPAQPVAARDRPMAAAVEGSMASPVEGPVPEAREGPMAASREGLGAAAREARMAEVARLLAEPAEEEGPEGRPRSRPGNGPGLAALPYLRLRHPLGVLGINYQQFLRHYLEHYPIAPGRIQELEGRRRRFVEACRAREAAFDAEYQRNPQRMDFDILTFSITLTASEIINPLIEELGCDKFISRE.

The tract at residues 1 to 71 (MSELPADQGV…PVPEAREGPM (71 aa)) is disordered. A compositionally biased stretch (basic and acidic residues) spans 20 to 34 (GDVRQAEVGGRRREP). Position 75 is an omega-N-methylarginine (Arg-75). The tract at residues 95 to 115 (AEPAEEEGPEGRPRSRPGNGP) is disordered.

In terms of assembly, heterodimer with EID2B. Interacts with the C-terminus of EP300. Interacts with HDAC1 and HDAC2. Interacts with SMAD2, SMAD4 and with the MH2 domain of SMAD3.

The protein localises to the nucleus. In terms of biological role, interacts with EP300 and acts as a repressor of MYOD-dependent transcription and muscle differentiation. Inhibits EP300 histone acetyltransferase activity. Acts as a repressor of TGFB/SMAD transcriptional responses. May act as a repressor of the TGFB/SMAD3-dependent signaling by selectively blocking formation of TGFB-induced SMAD3-SMAD4 complex. The chain is EP300-interacting inhibitor of differentiation 2 from Bos taurus (Bovine).